We begin with the raw amino-acid sequence, 58 residues long: Small ribosomal subunit protein bS21 (58 aa).

The protein belongs to the bacterial ribosomal protein bS21 family.

The sequence is that of Small ribosomal subunit protein bS21 from Staphylococcus aureus (strain bovine RF122 / ET3-1).